Here is a 596-residue protein sequence, read N- to C-terminus: RNA-binding protein involved in heterochromatin assembly dri1 (596 aa).

Residue Ser176 is modified to Phosphoserine. Residues 236–314 (KIVHVAGLTN…RMLEIIPSST (79 aa)) form the RRM domain. The segment at 335–364 (RPGDWNCPMCGFSNFQRRTSCFRCSFPGPT) adopts a RanBP2-type 1 zinc-finger fold. Residue Ser429 is modified to Phosphoserine. 2 RanBP2-type zinc fingers span residues 437-468 (RAGDWKCGSEGCGYHNFAKNVCCLRCGASRAT) and 552-580 (DQGDWLCECGFTNFRRRSNCLRCNAPHYS).

In terms of assembly, interacts with dpb4. Interacts with chp1.

It localises to the chromosome. Its subcellular location is the nucleus. The protein resides in the cytoplasm. It is found in the cytoplasmic granule. Its function is as follows. Mediates heterochromatin assembly by promoting RNAi-mediated heterochromatin silencing and histone deacetylation. Binds pericetromeric transcripts and recruits the RNA-induced transcriptional silencing (RITS) complex to heterochromatin. Recruits sir2 to chromatin to promote deacetylation of 'Lys-9' of histone H3. Involved in bipolar spindle assembly during mitosis. Required for proper localization of kinesin-14/Klp2 on the spindle microtubules. The polypeptide is RNA-binding protein involved in heterochromatin assembly dri1 (Schizosaccharomyces pombe (strain 972 / ATCC 24843) (Fission yeast)).